The following is a 445-amino-acid chain: UPF0761 membrane protein Mlg_0521 (445 aa).

The next 6 helical transmembrane spans lie at 56–76 (LLALVPLLTIGLSIFAAFPVF), 112–132 (GLTVVGLLALMVSALLMMAAI), 152–172 (FMVYWTVLTLAPILMGASLGI), 195–215 (LLAGMPFVAETVAFTFLYAAV), 225–245 (ALLGGLLAAALFEAAKGGFGW), and 259–279 (ALAALPIFLIWLYLSWVVVLV).

Belongs to the UPF0761 family.

It localises to the cell inner membrane. The polypeptide is UPF0761 membrane protein Mlg_0521 (Alkalilimnicola ehrlichii (strain ATCC BAA-1101 / DSM 17681 / MLHE-1)).